Here is a 1031-residue protein sequence, read N- to C-terminus: Protein translocase subunit SecA (1031 aa).

ATP is bound by residues Gln-143, 161 to 165, and Asp-661; that span reads GEGKT. Residues 963–973 show a composition bias toward basic and acidic residues; the sequence is KERLVAKHEES. A disordered region spans residues 963-1031; sequence KERLVAKHEE…GKKYKNCCGR (69 aa). Residues Cys-1017, Cys-1019, Cys-1028, and Cys-1029 each contribute to the Zn(2+) site.

Belongs to the SecA family. As to quaternary structure, monomer and homodimer. Part of the essential Sec protein translocation apparatus which comprises SecA, SecYEG and auxiliary proteins SecDF. Other proteins may also be involved. It depends on Zn(2+) as a cofactor.

Its subcellular location is the cell inner membrane. It localises to the cytoplasm. It catalyses the reaction ATP + H2O + cellular proteinSide 1 = ADP + phosphate + cellular proteinSide 2.. Functionally, part of the Sec protein translocase complex. Interacts with the SecYEG preprotein conducting channel. Has a central role in coupling the hydrolysis of ATP to the transfer of proteins into and across the cell membrane, serving as an ATP-driven molecular motor driving the stepwise translocation of polypeptide chains across the membrane. The polypeptide is Protein translocase subunit SecA (Prosthecochloris aestuarii (strain DSM 271 / SK 413)).